Reading from the N-terminus, the 201-residue chain is 3-isopropylmalate dehydratase small subunit (201 aa).

It belongs to the LeuD family. LeuD type 1 subfamily. In terms of assembly, heterodimer of LeuC and LeuD.

The catalysed reaction is (2R,3S)-3-isopropylmalate = (2S)-2-isopropylmalate. The protein operates within amino-acid biosynthesis; L-leucine biosynthesis; L-leucine from 3-methyl-2-oxobutanoate: step 2/4. In terms of biological role, catalyzes the isomerization between 2-isopropylmalate and 3-isopropylmalate, via the formation of 2-isopropylmaleate. This Rhodopseudomonas palustris (strain BisB18) protein is 3-isopropylmalate dehydratase small subunit.